Reading from the N-terminus, the 120-residue chain is UPF0102 protein Daro_0503 (120 aa).

The tract at residues 1-20 (MQVKANDTTTARGREAEDRA) is disordered.

It belongs to the UPF0102 family.

The sequence is that of UPF0102 protein Daro_0503 from Dechloromonas aromatica (strain RCB).